A 189-amino-acid chain; its full sequence is Glycerol-3-phosphate acyltransferase (189 aa).

4 consecutive transmembrane segments (helical) span residues 1–21 (MFWLLALLAYLLGSLSFAIVL), 77–97 (LQEQAWVGVCAVLGHLFPVYF), 111–131 (MLMGLYFPAALLAIAAWLLTF), and 151–171 (LLAWREPAALLPISVLTVMIV).

It belongs to the PlsY family. As to quaternary structure, probably interacts with PlsX.

It is found in the cell inner membrane. It carries out the reaction an acyl phosphate + sn-glycerol 3-phosphate = a 1-acyl-sn-glycero-3-phosphate + phosphate. It participates in lipid metabolism; phospholipid metabolism. Its function is as follows. Catalyzes the transfer of an acyl group from acyl-phosphate (acyl-PO(4)) to glycerol-3-phosphate (G3P) to form lysophosphatidic acid (LPA). This enzyme utilizes acyl-phosphate as fatty acyl donor, but not acyl-CoA or acyl-ACP. The protein is Glycerol-3-phosphate acyltransferase of Pseudomonas putida (strain W619).